The following is a 173-amino-acid chain: Mesencephalic astrocyte-derived neurotrophic factor homolog (173 aa).

Positions 1–22 (MNTSHIVLMICFIVGVGQTALA) are cleaved as a signal peptide. 4 cysteine pairs are disulfide-bonded: cysteine 28–cysteine 114, cysteine 31–cysteine 103, cysteine 61–cysteine 72, and cysteine 148–cysteine 151.

This sequence belongs to the ARMET family.

The protein resides in the secreted. Its function is as follows. Required during the maturation of the embryonic nervous system for maintenance of neuronal and cuticular connectivity. Essential for maintenance of dopaminergic neurons and dopamine levels. This Drosophila virilis (Fruit fly) protein is Mesencephalic astrocyte-derived neurotrophic factor homolog.